A 206-amino-acid chain; its full sequence is Imidazole glycerol phosphate synthase subunit hisH (206 aa).

In terms of domain architecture, Glutamine amidotransferase type-1 spans 2 to 206 (KVGLVDYSMG…REVMKKAASL (205 aa)). Catalysis depends on Cys-80, which acts as the Nucleophile. Residues His-184 and Glu-186 contribute to the active site.

As to quaternary structure, heterodimer of hisH and hisF.

It is found in the plastid. The protein resides in the chloroplast. The enzyme catalyses 5-[(5-phospho-1-deoxy-D-ribulos-1-ylimino)methylamino]-1-(5-phospho-beta-D-ribosyl)imidazole-4-carboxamide + L-glutamine = D-erythro-1-(imidazol-4-yl)glycerol 3-phosphate + 5-amino-1-(5-phospho-beta-D-ribosyl)imidazole-4-carboxamide + L-glutamate + H(+). The catalysed reaction is L-glutamine + H2O = L-glutamate + NH4(+). It functions in the pathway amino-acid biosynthesis; L-histidine biosynthesis; L-histidine from 5-phospho-alpha-D-ribose 1-diphosphate: step 5/9. Functionally, IGPS catalyzes the conversion of PRFAR and glutamine to IGP, AICAR and glutamate. The HisH subunit catalyzes the hydrolysis of glutamine to glutamate and ammonia as part of the synthesis of IGP and AICAR. The resulting ammonia molecule is channeled to the active site of HisF. This chain is Imidazole glycerol phosphate synthase subunit hisH, found in Cyanidioschyzon merolae (strain NIES-3377 / 10D) (Unicellular red alga).